The following is a 198-amino-acid chain: Acireductone dioxygenase (198 aa).

Residues His-97, His-99, Glu-103, and His-141 each coordinate Fe(2+). Ni(2+)-binding residues include His-97, His-99, Glu-103, and His-141.

This sequence belongs to the acireductone dioxygenase (ARD) family. Monomer. Fe(2+) is required as a cofactor. The cofactor is Ni(2+).

The enzyme catalyses 1,2-dihydroxy-5-(methylsulfanyl)pent-1-en-3-one + O2 = 3-(methylsulfanyl)propanoate + CO + formate + 2 H(+). The catalysed reaction is 1,2-dihydroxy-5-(methylsulfanyl)pent-1-en-3-one + O2 = 4-methylsulfanyl-2-oxobutanoate + formate + 2 H(+). It functions in the pathway amino-acid biosynthesis; L-methionine biosynthesis via salvage pathway; L-methionine from S-methyl-5-thio-alpha-D-ribose 1-phosphate: step 5/6. Catalyzes 2 different reactions between oxygen and the acireductone 1,2-dihydroxy-3-keto-5-methylthiopentene (DHK-MTPene) depending upon the metal bound in the active site. Fe-containing acireductone dioxygenase (Fe-ARD) produces formate and 2-keto-4-methylthiobutyrate (KMTB), the alpha-ketoacid precursor of methionine in the methionine recycle pathway. Ni-containing acireductone dioxygenase (Ni-ARD) produces methylthiopropionate, carbon monoxide and formate, and does not lie on the methionine recycle pathway. This Synechococcus elongatus (strain ATCC 33912 / PCC 7942 / FACHB-805) (Anacystis nidulans R2) protein is Acireductone dioxygenase.